Here is a 116-residue protein sequence, read N- to C-terminus: Large ribosomal subunit protein bL19 (116 aa).

It belongs to the bacterial ribosomal protein bL19 family.

Its function is as follows. This protein is located at the 30S-50S ribosomal subunit interface and may play a role in the structure and function of the aminoacyl-tRNA binding site. The chain is Large ribosomal subunit protein bL19 from Flavobacterium johnsoniae (strain ATCC 17061 / DSM 2064 / JCM 8514 / BCRC 14874 / CCUG 350202 / NBRC 14942 / NCIMB 11054 / UW101) (Cytophaga johnsonae).